Reading from the N-terminus, the 206-residue chain is Large ribosomal subunit protein uL22m (206 aa).

The transit peptide at 1–40 (MAAAVLGQLGALWIHNLRSRGKLALGVLPQSYIHTSASLD) directs the protein to the mitochondrion.

This sequence belongs to the universal ribosomal protein uL22 family. Component of the mitochondrial large ribosomal subunit (mt-LSU). Mature mammalian 55S mitochondrial ribosomes consist of a small (28S) and a large (39S) subunit. The 28S small subunit contains a 12S ribosomal RNA (12S mt-rRNA) and 30 different proteins. The 39S large subunit contains a 16S rRNA (16S mt-rRNA), a copy of mitochondrial valine transfer RNA (mt-tRNA(Val)), which plays an integral structural role, and 52 different proteins.

Its subcellular location is the mitochondrion. In Homo sapiens (Human), this protein is Large ribosomal subunit protein uL22m (MRPL22).